We begin with the raw amino-acid sequence, 451 residues long: Deoxyguanosinetriphosphate triphosphohydrolase-like protein (451 aa).

Residues 61–274 (RLTHSLEVAQ…MELADDIAYG (214 aa)) form the HD domain.

The protein belongs to the dGTPase family. Type 2 subfamily.

The protein is Deoxyguanosinetriphosphate triphosphohydrolase-like protein of Actinobacillus succinogenes (strain ATCC 55618 / DSM 22257 / CCUG 43843 / 130Z).